Reading from the N-terminus, the 580-residue chain is MAIYSAQAPNSILEEEARFEAEVSETQAWWNSTDLFRLTRRPYTARDVVRLRGSMRQSYASNEMAKKLWRTLKTHQANKTASRTFGALDPVQVSMMAKYLDSIYVSGWQCSSTHTTTNEPGPDLADYPYDTVPNKVEHLFFAQQFHDRKQKEARMSMTREERSKTPYIDYLKPIIADGDTGFGGATATVKLCKLFVERGAAGVHIEDQASVTKKCGHMAGKVLVSVGEHVNRMVAARLQFDIMGVETLLVARTDAVAATLIQTNVDARDHQFILGATNPNLKGKPLADVLARAMASGKSGADLQAVEDEWMAMADLKLFSDCVVDGIKALNVSEQEKGRRLGEWMQQTGGNTGNVLSYYQAKELAEKLGISNLFWDWDLPRTREGFYRFQGSVKAAIVRGWAFGPHADIIWMETSSPDMVECRDFALGVKSKHPEIMLAYNLSPSFNWDASRMTDEQMKNFIPEIARLGYCWQFITLAGFHADALVIDTFAKDFAQRGMLAYVEKIQRQEMMNGVDTLAHQKWSGANYYDQLLKTVQGGISATAAMAKGVTEDQFEETQSSTLALESNIGAGTVLAKSRM.

106–108 contacts substrate; sequence SGW. Position 177 (aspartate 177) interacts with Mg(2+). Catalysis depends on cysteine 215, which acts as the Proton acceptor. Residues 216-217, arginine 252, 441-445, and threonine 476 contribute to the substrate site; these read GH and NLSPS. The Microbody targeting signal motif lies at 578-580; sequence SRM.

The protein belongs to the isocitrate lyase/PEP mutase superfamily. Isocitrate lyase family. Homotetramer. The cofactor is Mg(2+).

The protein localises to the glyoxysome. The enzyme catalyses D-threo-isocitrate = glyoxylate + succinate. Its pathway is carbohydrate metabolism; glyoxylate cycle; (S)-malate from isocitrate: step 1/2. Involved in storage lipid mobilization during the growth of higher plant seedling. The protein is Isocitrate lyase (ICL 8) of Pinus taeda (Loblolly pine).